The primary structure comprises 67 residues: Large ribosomal subunit protein uL29 (67 aa).

Belongs to the universal ribosomal protein uL29 family.

This is Large ribosomal subunit protein uL29 from Desulfitobacterium hafniense (strain DSM 10664 / DCB-2).